A 251-amino-acid polypeptide reads, in one-letter code: uncharacterized protein (251 aa).

The 226-residue stretch at 21–246 (KGSSPFAFYA…ITYEEFNKQL (226 aa)) folds into the AMMECR1 domain.

This is an uncharacterized protein from Saccharomyces cerevisiae (strain ATCC 204508 / S288c) (Baker's yeast).